A 499-amino-acid chain; its full sequence is MKEFQVYLELDRSRQHDFLYPLIFREYIYALAYDHGLNSSILVENLGYDNKSSLLIVKRLITRMYQQNHLILSANDSNKNQFLGYNKNLYSQIISEGFAVSVEIPFSLQLISSLEEEEIVKSYNLRSIHSIFPFFEDKFPYLNYVSDVRIPYPIHLEILVQTLRYWVKDASSFHLLRLFLYEYFNWNSLITPKKWISTFSQSNPRLFLFLYNFYVCEYESIFIFLRKKSSYLRLTSSGVLFERIYFYAKIEHRVEVLDKDFPSTLWFFKDPFIHYVRYKGKSILSSKNTPFFMNKWKYYLIHLWQCHFYVWSQPGKIHINQLSEHSFYFLGYFSNVRLNPSVVRSQMLENSFIIENVMKKLDTIIPIIPLIRSLAKANFCNVLGHPISKPVWADSSDFDIIDRFLRICRNLSHYYNGSSKKKSLYRIKYILRLSCIKTLARKHKSTVRVFLKRLGSEVLEEFFTEEEEILSLILPRASSTLQRLYRGRIWYLDIFYFHQ.

This sequence belongs to the intron maturase 2 family. MatK subfamily.

It localises to the plastid. It is found in the chloroplast. In terms of biological role, usually encoded in the trnK tRNA gene intron. Probably assists in splicing its own and other chloroplast group II introns. The protein is Maturase K of Gymnocladus chinensis (Soap tree).